We begin with the raw amino-acid sequence, 227 residues long: ATP synthase F(0) complex subunit a (227 aa).

6 helical membrane passes run 14 to 34, 69 to 89, 98 to 118, 139 to 159, 165 to 185, and 189 to 209; these read FLGI…FPSP, WAMI…LGLL, QLSM…LIGM, IPIL…ALGV, LTAG…MLSI, and IATL…AVAM.

This sequence belongs to the ATPase A chain family. As to quaternary structure, component of the ATP synthase complex composed at least of ATP5F1A/subunit alpha, ATP5F1B/subunit beta, ATP5MC1/subunit c (homooctomer), MT-ATP6/subunit a, MT-ATP8/subunit 8, ATP5ME/subunit e, ATP5MF/subunit f, ATP5MG/subunit g, ATP5MK/subunit k, ATP5MJ/subunit j, ATP5F1C/subunit gamma, ATP5F1D/subunit delta, ATP5F1E/subunit epsilon, ATP5PF/subunit F6, ATP5PB/subunit b, ATP5PD/subunit d, ATP5PO/subunit OSCP. ATP synthase complex consists of a soluble F(1) head domain (subunits alpha(3) and beta(3)) - the catalytic core - and a membrane F(0) domain - the membrane proton channel (subunits c, a, 8, e, f, g, k and j). These two domains are linked by a central stalk (subunits gamma, delta, and epsilon) rotating inside the F1 region and a stationary peripheral stalk (subunits F6, b, d, and OSCP). Interacts with DNAJC30; interaction is direct.

Its subcellular location is the mitochondrion inner membrane. The catalysed reaction is H(+)(in) = H(+)(out). Subunit a, of the mitochondrial membrane ATP synthase complex (F(1)F(0) ATP synthase or Complex V) that produces ATP from ADP in the presence of a proton gradient across the membrane which is generated by electron transport complexes of the respiratory chain. ATP synthase complex consist of a soluble F(1) head domain - the catalytic core - and a membrane F(1) domain - the membrane proton channel. These two domains are linked by a central stalk rotating inside the F(1) region and a stationary peripheral stalk. During catalysis, ATP synthesis in the catalytic domain of F(1) is coupled via a rotary mechanism of the central stalk subunits to proton translocation. With the subunit c (ATP5MC1), forms the proton-conducting channel in the F(0) domain, that contains two crucial half-channels (inlet and outlet) that facilitate proton movement from the mitochondrial intermembrane space (IMS) into the matrix. Protons are taken up via the inlet half-channel and released through the outlet half-channel, following a Grotthuss mechanism. This is ATP synthase F(0) complex subunit a from Polypterus ornatipinnis (Ornate bichir).